A 419-amino-acid polypeptide reads, in one-letter code: MAHTLAQKILQRHTDEAITDAGQIVRCRVSMVLANDITAPLAIKSFRAMGAKRVFDKDRVALVMDHFTPQKDIEAAQQVKLTREFAREMGVTHYYEGGDCGVEHALLPELGLVGPGDVVVGADSHTCTYGGLGAFATGLGSTDVAGAMALGETWFKVPPTIRATFTGTLPAYVGAKDLILTLIGAIGVDGALYRALEFDGAAIEALDVEGRMTMANMAIEAGGKAGLFAADAKTLTYCTAAGRTGDAAFSADAGAVYERELSFDVTGMTPVVACPHLPDNVKPVSEVKDVTVQQVVIGSCTNGRIGDLREAAAVLRGRKVSRDVRCIVLPATPGIWRQALREGLIETFMEAGCIVGPATCGPCLGGHMGILADGERAIATTNRNFKGRMGSLESEVYLSGPATAAASAVTGVITDPSTL.

3 residues coordinate [4Fe-4S] cluster: C300, C360, and C363.

It belongs to the aconitase/IPM isomerase family. LeuC type 2 subfamily. As to quaternary structure, heterodimer of LeuC and LeuD. Requires [4Fe-4S] cluster as cofactor.

The catalysed reaction is (2R,3S)-3-isopropylmalate = (2S)-2-isopropylmalate. It participates in amino-acid biosynthesis; L-leucine biosynthesis; L-leucine from 3-methyl-2-oxobutanoate: step 2/4. Catalyzes the isomerization between 2-isopropylmalate and 3-isopropylmalate, via the formation of 2-isopropylmaleate. The chain is 3-isopropylmalate dehydratase large subunit from Nitratidesulfovibrio vulgaris (strain DP4) (Desulfovibrio vulgaris).